The chain runs to 547 residues: MNPVSLLSLSGERRSANWKPSSWDSNQIHQSLKSDFNDLQEKWHTELKQAVEQMLEAVAEPLQKLTLIDDIQRLGVAYRFEKQIDDALSSIYSNYAAEVSSKKDLLAASLYFRLLRQHGCYVSPDIFIQFKDEAGQFKASLGDDVEGLLSLYEASYLGIKGETILDDAKAFSTSTLENLMPHVEADIASRISHALHLPLHWNMRRMEARLYIDVYRENKKRRNDNLLEFARLDFNMLQVIHQRDLKDVSFWWDFLDLPRKLGFIRDRLMESFIFSVGLNFEPQFSECRKAATKDILLITVLDDIYDIYGSMDEVEIFNNAVNRWDLGAVDELPEYMQLCYLGLLNSVNELAYVTMKDTGRNVLDFLKKLWKRHFNAAVKESRWFHRQYTPTLEEYMENAQISIGAPLVLTHAYVKMLKYMPNEDVNHVDKYLKLISMMCYVFRLYDDWGTSKAEIERGDVPKAIQCYMHEAKVSEEIAREHIKNIINERWKELNEECLKATDLNRKFVAAVLDALRAAAFFYHDRDGFGEPDHKFKSQAMALFSQQV.

Arginine 265, aspartate 302, aspartate 306, arginine 443, and aspartate 446 together coordinate (2E,6E)-farnesyl diphosphate. 2 residues coordinate Mg(2+): aspartate 302 and aspartate 306. A DDXXD motif motif is present at residues 302–306; the sequence is DDIYD. Mg(2+) contacts are provided by aspartate 446, threonine 450, and glutamate 454.

It belongs to the terpene synthase family. Tpsb subfamily. As to quaternary structure, monomer. Mg(2+) serves as cofactor.

The protein resides in the cytoplasm. It catalyses the reaction (2E,6E)-farnesyl diphosphate = (1S,5S,6R)-alpha-bergamotene + diphosphate. It participates in secondary metabolite biosynthesis; terpenoid biosynthesis. Its function is as follows. Sesquiterpene synthase involved in the biosynthesis of volatile organic compounds. Mediates the conversion of (2E,6E)-farnesyl diphosphate (FPP) into alpha-bergamotene. Does not use (2E)-geranyl diphosphate (GPP) as substrate. In Cananga odorata (Ylang-ylang tree), this protein is Sesquiterpene synthase TPS3.